The sequence spans 905 residues: Translation initiation factor IF-2 (905 aa).

Disordered stretches follow at residues 52–84 (QSHG…SKSV), 116–230 (AKKR…QKKT), and 269–318 (FEKE…FEKP). Residues 65–84 (KSKTTSTARVTGSSGKSKSV) are compositionally biased toward polar residues. The segment covering 116 to 138 (AKKRAEEEAKKREQVKKEAEERQ) has biased composition (basic and acidic residues). Residues 165–178 (VVVKKGSKAAAAAK) show a composition bias toward low complexity. 2 stretches are compositionally biased toward basic and acidic residues: residues 190–230 (PKVE…QKKT) and 269–278 (FEKERREIKR). One can recognise a tr-type G domain in the interval 406-575 (TRPPVVTIMG…NLQAELMELE (170 aa)). The G1 stretch occupies residues 415 to 422 (GHVDHGKT). 415 to 422 (GHVDHGKT) lines the GTP pocket. The tract at residues 440-444 (GITQH) is G2. Residues 461-464 (DTPG) are G3. GTP is bound by residues 461–465 (DTPGH) and 515–518 (NKMD). The tract at residues 515–518 (NKMD) is G4. Residues 551–553 (SAK) form a G5 region.

The protein belongs to the TRAFAC class translation factor GTPase superfamily. Classic translation factor GTPase family. IF-2 subfamily.

It localises to the cytoplasm. One of the essential components for the initiation of protein synthesis. Protects formylmethionyl-tRNA from spontaneous hydrolysis and promotes its binding to the 30S ribosomal subunits. Also involved in the hydrolysis of GTP during the formation of the 70S ribosomal complex. This chain is Translation initiation factor IF-2, found in Psychrobacter sp. (strain PRwf-1).